A 425-amino-acid chain; its full sequence is Interferon-activable protein 211 (425 aa).

The Pyrin domain maps to 1–88 (MVNEYKRIVL…AEILKKERSE (88 aa)). Positions 86 to 99 (RSEVTGETSLEKNG) are enriched in basic and acidic residues. Residues 86–223 (RSEVTGETSL…QNQNIPRGAV (138 aa)) form a disordered region. Residues 122 to 153 (TSATQEETSTAQAGTSTAQAGTSTAQAGTSTA) are compositionally biased toward low complexity. Tandem repeats lie at residues 129 to 135 (TSTAQAG), 136 to 142 (TSTAQAG), 143 to 149 (TSTAQAG), and 150 to 156 (TSTAQKR). The 4 X 7 AA tandem repeats of T-S-T-A-Q-A-[GR] stretch occupies residues 129–177 (TSTAQAGTSTAQAGTSTAQAGTSTAQKRKSMREEETGVKKSKAAKEPDQ). Over residues 159 to 176 (MREEETGVKKSKAAKEPD) the composition is skewed to basic and acidic residues. Over residues 190–206 (SPILHSSSSASSNILSA) the composition is skewed to low complexity. Polar residues predominate over residues 207–218 (KNQKSQPQNQNI). The region spanning 213-413 (PQNQNIPRGA…CGDHSFVKVT (201 aa)) is the HIN-200 domain.

This sequence belongs to the HIN-200 family. In terms of assembly, interacts with HOXB2. As to expression, mononuclear phagocytes.

It localises to the nucleus. Functionally, inhibits cell growth via p53/TP53 and RB1-dependent and independent pathways. May work in synergy with TP53 to promote the transcription of CDKN1A/P21. In Mus musculus (Mouse), this protein is Interferon-activable protein 211.